The chain runs to 546 residues: MAAKEVRFGDDARSKMLKGVNTLANAVKVTLGPKGRNVVLDKSFGAPTITKDGVSVAKEIELEDKFENMGAQMVKEVASKANDEAGDGTTTATVLAQAIVTEGLKSVAAGMNPMDLKRGIDKAVIAAVEELKALSTDCADSKSIAQVGTISANSDAEVGDIIAQAMEKVGKEGVITVEEGQALQNELDVVEGMQFDRGYLSPYFINNQENGTVELDNPFILLVDKKISNIRELLPTLEGVAKAGKPLMIIAEDVEGEALATLVVNNMRGIVKVAAVKAPGFGDRRKAMLQDIAILTGGTVISEEIGLELEKVQLEDLGTAKRVVINKDNTTVVDGNGDQEAIEGRCAQIKGQIEESSSDYDKEKLQERLAKLSGGVAVIKVGAATEVEMKEKKDRVEDALHATRAAVEEGVVPGGGVALVRAAAKLSELTGDNEDQTVGVKLALRAMEAPLRQISINSGAEASVVVNEVKNGDGNYGYNAGNDTYGDMLEMGILDPTKVTRSALQFASSIASLMITTEAMVAELPKDEAAPAMPDMGGMGGMGGMM.

Residues 30-33 (TLGP), K51, 87-91 (DGTTT), G415, and D495 each bind ATP.

This sequence belongs to the chaperonin (HSP60) family. In terms of assembly, forms a cylinder of 14 subunits composed of two heptameric rings stacked back-to-back. Interacts with the co-chaperonin GroES.

It localises to the cytoplasm. The enzyme catalyses ATP + H2O + a folded polypeptide = ADP + phosphate + an unfolded polypeptide.. Together with its co-chaperonin GroES, plays an essential role in assisting protein folding. The GroEL-GroES system forms a nano-cage that allows encapsulation of the non-native substrate proteins and provides a physical environment optimized to promote and accelerate protein folding. The polypeptide is Chaperonin GroEL (Alteromonas mediterranea (strain DSM 17117 / CIP 110805 / LMG 28347 / Deep ecotype)).